Here is a 450-residue protein sequence, read N- to C-terminus: Phosphoglucosamine mutase (450 aa).

Ser104 (phosphoserine intermediate) is an active-site residue. The Mg(2+) site is built by Ser104, Asp245, Asp247, and Asp249. Position 104 is a phosphoserine (Ser104).

Belongs to the phosphohexose mutase family. The cofactor is Mg(2+). Activated by phosphorylation.

It carries out the reaction alpha-D-glucosamine 1-phosphate = D-glucosamine 6-phosphate. In terms of biological role, catalyzes the conversion of glucosamine-6-phosphate to glucosamine-1-phosphate. The protein is Phosphoglucosamine mutase of Phenylobacterium zucineum (strain HLK1).